A 146-amino-acid chain; its full sequence is Hemoglobin subunit beta (146 aa).

Thr-1 carries the blocked amino end (Thr) modification. Residues 2-146 (HWTAEERHYI…VAHALTLQYH (145 aa)) form the Globin domain. Heme b contacts are provided by His-63 and His-92.

It belongs to the globin family. As to quaternary structure, heterotetramer of two alpha chains and two beta chains. As to expression, red blood cells.

Functionally, involved in oxygen transport from the lung to the various peripheral tissues. The polypeptide is Hemoglobin subunit beta (HBB) (Caretta caretta (Loggerhead sea turtle)).